Consider the following 31-residue polypeptide: Conotoxin (31 aa).

This sequence belongs to the conotoxin S superfamily. In terms of processing, contains 5 disulfide bonds. As to expression, expressed by the venom duct.

Its subcellular location is the secreted. The chain is Conotoxin from Conus striatus (Striated cone).